The sequence spans 281 residues: Beta-lactamase (281 aa).

An N-terminal signal peptide occupies residues 1 to 24 (MKKLIFLIVIALVLSACNSNSSHA). The active-site Acyl-ester intermediate is the Ser63. 225 to 227 (KSG) is a binding site for substrate.

This sequence belongs to the class-A beta-lactamase family.

It carries out the reaction a beta-lactam + H2O = a substituted beta-amino acid. This Staphylococcus aureus protein is Beta-lactamase (blaZ).